The sequence spans 224 residues: UPF0758 protein XF_0148 (224 aa).

The region spanning 102–224 (SIHDPISAGR…PVSFAEHGWL (123 aa)) is the MPN domain. Zn(2+) is bound by residues histidine 173, histidine 175, and aspartate 186. The short motif at 173-186 (HNHPSGNREPSPAD) is the JAMM motif element.

This sequence belongs to the UPF0758 family.

This chain is UPF0758 protein XF_0148, found in Xylella fastidiosa (strain 9a5c).